The following is a 188-amino-acid chain: dCTP deaminase (188 aa).

DCTP-binding positions include 111 to 116, 135 to 137, Gln156, Tyr170, and Gln180; these read KSTYAR and TLE. The Proton donor/acceptor role is filled by Glu137.

Belongs to the dCTP deaminase family. Homotrimer.

The catalysed reaction is dCTP + H2O + H(+) = dUTP + NH4(+). The protein operates within pyrimidine metabolism; dUMP biosynthesis; dUMP from dCTP (dUTP route): step 1/2. Functionally, catalyzes the deamination of dCTP to dUTP. The protein is dCTP deaminase of Ralstonia pickettii (strain 12J).